The primary structure comprises 980 residues: NACHT, LRR and PYD domains-containing protein 7 (980 aa).

One can recognise a Pyrin domain in the interval 1 to 93 (MTSPQLEWTL…CKMAKAEMME (93 aa)). The disordered stretch occupies residues 104–123 (ELGDAEEDSELAKPGEKEGW). The span at 113–123 (ELAKPGEKEGW) shows a compositional bias: basic and acidic residues. The region spanning 172–491 (YTVVLHGPAG…LEKEEGEDRD (320 aa)) is the NACHT domain. ATP is bound at residue 178 to 185 (GPAGVGKT). 9 LRR repeats span residues 614–638 (CQDLQKLSLQVAKGVFLENYMDFEL), 674–697 (NSNLKFLEVKQSFLSDSSVRILCD), 760–784 (KCNLQYLRLGGHCATPEQWAEFFYV), 788–810 (NQSLKHLRLSANVLLDEGAMLLY), 817–840 (KHFLQMLSLENCRLTEASCKDLAA), 845–868 (SKKLTHLCLAKNPIGDTGVKFLCE), 874–897 (DCKLQTLVLQQCSITKLGCRYLSE), 902–928 (ACSLTNLDLSINQIARGLWILCQALEN), and 933–957 (LKHLRLKTYETNLEIKKLLEEVKEK).

It belongs to the NLRP family. As to quaternary structure, directly interacts with CASP1 and IL1B. In terms of tissue distribution, expressed in numerous tissues including uterus and ovary, with low levels in heart and brain. Not detected in skeletal muscle.

Functionally, inhibits CASP1/caspase-1-dependent IL1B secretion. The chain is NACHT, LRR and PYD domains-containing protein 7 (NLRP7) from Homo sapiens (Human).